The following is a 67-amino-acid chain: Surface composition regulator (67 aa).

It belongs to the GlgS family.

Its function is as follows. Major determinant of cell surface composition. Negatively regulates motility, adhesion and synthesis of biofilm exopolysaccharides. The sequence is that of Surface composition regulator from Salmonella paratyphi A (strain ATCC 9150 / SARB42).